A 119-amino-acid polypeptide reads, in one-letter code: Ribonuclease P protein component (119 aa).

It belongs to the RnpA family. As to quaternary structure, consists of a catalytic RNA component (M1 or rnpB) and a protein subunit.

It carries out the reaction Endonucleolytic cleavage of RNA, removing 5'-extranucleotides from tRNA precursor.. In terms of biological role, RNaseP catalyzes the removal of the 5'-leader sequence from pre-tRNA to produce the mature 5'-terminus. It can also cleave other RNA substrates such as 4.5S RNA. The protein component plays an auxiliary but essential role in vivo by binding to the 5'-leader sequence and broadening the substrate specificity of the ribozyme. The chain is Ribonuclease P protein component from Proteus mirabilis (strain HI4320).